A 246-amino-acid chain; its full sequence is uncharacterized protein (246 aa).

Disordered stretches follow at residues 29 to 54 (SLET…ENGS), 93 to 114 (LRRT…EDKF), and 148 to 246 (PIPP…SVVI). Residues 35-49 (PTSSSPSLSSNSDVS) show a composition bias toward low complexity. Residues 172–183 (RQQTNNIRTLHV) show a composition bias toward polar residues. Composition is skewed to low complexity over residues 190 to 203 (SSSS…PSSS) and 214 to 225 (SKTTKNRSSNSS). Asparagine 219 carries an N-linked (GlcNAc...) asparagine glycan. Over residues 235 to 246 (LTPSPTFESVVI) the composition is skewed to polar residues.

This is an uncharacterized protein from Caenorhabditis elegans.